The following is a 265-amino-acid chain: MKVKSFAKIDLGYSVYKKRKNITKHDFESIFILVESVYDDIEIIKIDKNVDDVHYYNETNEIYVYSRLVYKTLEWIRQTYRIKNHYRINIKKRIPIGAGLGGGSSNAAVIMKSILELEGIKEINYKDVVNKLGADIPFFLSGYKTAYVSDCGSTLEDLSGQFKLSYEVHLMNVNVNTKLVFEKFDDNQWHVIKNNFKTIIKNLKENIVTNIYNDLQEHCFELYPNIRYKYNELLREGFYTILSGAGSSFICIKLKDKENQVIHEN.

The active site involves Lys-8. 95 to 105 (PIGAGLGGGSS) contributes to the ATP binding site. Asp-135 is a catalytic residue.

The protein belongs to the GHMP kinase family. IspE subfamily.

It catalyses the reaction 4-CDP-2-C-methyl-D-erythritol + ATP = 4-CDP-2-C-methyl-D-erythritol 2-phosphate + ADP + H(+). The protein operates within isoprenoid biosynthesis; isopentenyl diphosphate biosynthesis via DXP pathway; isopentenyl diphosphate from 1-deoxy-D-xylulose 5-phosphate: step 3/6. Functionally, catalyzes the phosphorylation of the position 2 hydroxy group of 4-diphosphocytidyl-2C-methyl-D-erythritol. The protein is 4-diphosphocytidyl-2-C-methyl-D-erythritol kinase of Ureaplasma urealyticum serovar 10 (strain ATCC 33699 / Western).